The following is a 392-amino-acid chain: Phosphoglycerate kinase (392 aa).

Substrate is bound by residues 21 to 23 (DLN), R36, 59 to 62 (HLGR), R113, and R146. Residues K197, E319, and 345-348 (GGDT) contribute to the ATP site.

It belongs to the phosphoglycerate kinase family. As to quaternary structure, monomer.

Its subcellular location is the cytoplasm. It carries out the reaction (2R)-3-phosphoglycerate + ATP = (2R)-3-phospho-glyceroyl phosphate + ADP. Its pathway is carbohydrate degradation; glycolysis; pyruvate from D-glyceraldehyde 3-phosphate: step 2/5. The sequence is that of Phosphoglycerate kinase from Nitrosococcus oceani (strain ATCC 19707 / BCRC 17464 / JCM 30415 / NCIMB 11848 / C-107).